The primary structure comprises 429 residues: Phosphoglucosamine mutase (429 aa).

Catalysis depends on S96, which acts as the Phosphoserine intermediate. Mg(2+)-binding residues include S96, D230, D232, and D234. At S96 the chain carries Phosphoserine.

The protein belongs to the phosphohexose mutase family. The cofactor is Mg(2+). Post-translationally, activated by phosphorylation.

It catalyses the reaction alpha-D-glucosamine 1-phosphate = D-glucosamine 6-phosphate. Catalyzes the conversion of glucosamine-6-phosphate to glucosamine-1-phosphate. The sequence is that of Phosphoglucosamine mutase from Thermotoga petrophila (strain ATCC BAA-488 / DSM 13995 / JCM 10881 / RKU-1).